The primary structure comprises 73 residues: Large ribosomal subunit protein bL31c (73 aa).

This sequence belongs to the bacterial ribosomal protein bL31 family. Type A subfamily. In terms of assembly, part of the 50S ribosomal subunit.

Its subcellular location is the plastid. The protein resides in the chloroplast. Binds the 23S rRNA. This Palmaria palmata (Dulse) protein is Large ribosomal subunit protein bL31c.